We begin with the raw amino-acid sequence, 349 residues long: Bifunctional protein FolKE (349 aa).

A 2-amino-4-hydroxy-6-hydroxymethyldihydropteridine pyrophosphokinase region spans residues Met1 to Asp226. The GTP cyclohydrolase 1 stretch occupies residues Asp226–Leu349.

The protein in the N-terminal section; belongs to the HPPK family. It in the C-terminal section; belongs to the GTP cyclohydrolase I family. Homomer.

It catalyses the reaction 6-hydroxymethyl-7,8-dihydropterin + ATP = (7,8-dihydropterin-6-yl)methyl diphosphate + AMP + H(+). The enzyme catalyses GTP + H2O = 7,8-dihydroneopterin 3'-triphosphate + formate + H(+). It participates in cofactor biosynthesis; 7,8-dihydroneopterin triphosphate biosynthesis; 7,8-dihydroneopterin triphosphate from GTP: step 1/1. The protein operates within cofactor biosynthesis; tetrahydrofolate biosynthesis; 2-amino-4-hydroxy-6-hydroxymethyl-7,8-dihydropteridine diphosphate from 7,8-dihydroneopterin triphosphate: step 4/4. The sequence is that of Bifunctional protein FolKE (folKE) from Lactococcus lactis subsp. lactis (strain IL1403) (Streptococcus lactis).